The following is a 479-amino-acid chain: Glycogen synthase (479 aa).

Residue Lys15 coordinates ADP-alpha-D-glucose.

The protein belongs to the glycosyltransferase 1 family. Bacterial/plant glycogen synthase subfamily.

It carries out the reaction [(1-&gt;4)-alpha-D-glucosyl](n) + ADP-alpha-D-glucose = [(1-&gt;4)-alpha-D-glucosyl](n+1) + ADP + H(+). It participates in glycan biosynthesis; glycogen biosynthesis. Synthesizes alpha-1,4-glucan chains using ADP-glucose. The sequence is that of Glycogen synthase from Acidiphilium cryptum (strain JF-5).